The sequence spans 533 residues: Apolipoprotein N-acyltransferase (533 aa).

6 consecutive transmembrane segments (helical) span residues 17–37 (ALLAILAGAIGVLALPPFGFF), 74–94 (WLFGFGYFVAGLWWLGHALLI), 105–125 (LAILGLPAFLAIFYGVAAVLA), 127–147 (LLWSDGMGRIAALAFGFGLLE), 178–198 (VIGVLGVTVLAVFVFAAPALL), and 205–225 (VPGIGLAVLIAAAHFAYGYYA). Residues 245–495 (VQPAIDQEAK…QGFVDSTLSG (251 aa)) enclose the CN hydrolase domain. The active-site Proton acceptor is E290. Residue K354 is part of the active site. C407 acts as the Nucleophile in catalysis. Residues 509 to 529 (YFWLIIGIVGMIAVISRMGFI) traverse the membrane as a helical segment.

Belongs to the CN hydrolase family. Apolipoprotein N-acyltransferase subfamily.

Its subcellular location is the cell inner membrane. The catalysed reaction is N-terminal S-1,2-diacyl-sn-glyceryl-L-cysteinyl-[lipoprotein] + a glycerophospholipid = N-acyl-S-1,2-diacyl-sn-glyceryl-L-cysteinyl-[lipoprotein] + a 2-acyl-sn-glycero-3-phospholipid + H(+). It participates in protein modification; lipoprotein biosynthesis (N-acyl transfer). Its function is as follows. Catalyzes the phospholipid dependent N-acylation of the N-terminal cysteine of apolipoprotein, the last step in lipoprotein maturation. This is Apolipoprotein N-acyltransferase from Rhizobium rhizogenes (strain K84 / ATCC BAA-868) (Agrobacterium radiobacter).